Reading from the N-terminus, the 279-residue chain is Shikimate dehydrogenase (NADP(+)) (279 aa).

Shikimate contacts are provided by residues 14 to 16 (SLS) and Thr-62. The Proton acceptor role is filled by Lys-66. Asn-87 and Asp-103 together coordinate shikimate. NADP(+)-binding positions include 127-131 (GAGGA), 151-156 (NRTKAK), and Met-215. Tyr-217 contacts shikimate. Gly-239 provides a ligand contact to NADP(+).

The protein belongs to the shikimate dehydrogenase family. Homodimer.

The catalysed reaction is shikimate + NADP(+) = 3-dehydroshikimate + NADPH + H(+). It participates in metabolic intermediate biosynthesis; chorismate biosynthesis; chorismate from D-erythrose 4-phosphate and phosphoenolpyruvate: step 4/7. Involved in the biosynthesis of the chorismate, which leads to the biosynthesis of aromatic amino acids. Catalyzes the reversible NADPH linked reduction of 3-dehydroshikimate (DHSA) to yield shikimate (SA). In Alteromonas mediterranea (strain DSM 17117 / CIP 110805 / LMG 28347 / Deep ecotype), this protein is Shikimate dehydrogenase (NADP(+)).